The chain runs to 341 residues: S-adenosylmethionine:tRNA ribosyltransferase-isomerase (341 aa).

The protein belongs to the QueA family. Monomer.

It localises to the cytoplasm. The enzyme catalyses 7-aminomethyl-7-carbaguanosine(34) in tRNA + S-adenosyl-L-methionine = epoxyqueuosine(34) in tRNA + adenine + L-methionine + 2 H(+). It functions in the pathway tRNA modification; tRNA-queuosine biosynthesis. Functionally, transfers and isomerizes the ribose moiety from AdoMet to the 7-aminomethyl group of 7-deazaguanine (preQ1-tRNA) to give epoxyqueuosine (oQ-tRNA). This chain is S-adenosylmethionine:tRNA ribosyltransferase-isomerase, found in Symbiobacterium thermophilum (strain DSM 24528 / JCM 14929 / IAM 14863 / T).